A 370-amino-acid polypeptide reads, in one-letter code: 3-dehydroquinate synthase (370 aa).

NAD(+) is bound by residues 107–111 (GVIGD), 131–132 (TS), Lys-144, and Lys-153. Residues Glu-186, His-249, and His-267 each coordinate Zn(2+).

The protein belongs to the sugar phosphate cyclases superfamily. Dehydroquinate synthase family. Co(2+) is required as a cofactor. The cofactor is Zn(2+). Requires NAD(+) as cofactor.

The protein localises to the cytoplasm. The catalysed reaction is 7-phospho-2-dehydro-3-deoxy-D-arabino-heptonate = 3-dehydroquinate + phosphate. Its pathway is metabolic intermediate biosynthesis; chorismate biosynthesis; chorismate from D-erythrose 4-phosphate and phosphoenolpyruvate: step 2/7. Functionally, catalyzes the conversion of 3-deoxy-D-arabino-heptulosonate 7-phosphate (DAHP) to dehydroquinate (DHQ). The chain is 3-dehydroquinate synthase from Jannaschia sp. (strain CCS1).